A 963-amino-acid chain; its full sequence is Spliceosome associated factor 3, U4/U6 recycling protein (963 aa).

Residues 1–11 (MATAAETSASE) show a composition bias toward low complexity. 2 disordered regions span residues 1–36 (MATA…RTRR) and 50–90 (TMGP…YDEE). Ala-2 carries the post-translational modification N-acetylalanine. Positions 2–351 (ATAAETSASE…LVPDLWIRYS (350 aa)) are mediates interaction with PRPF3. Phosphoserine is present on residues Ser-10 and Ser-16. Positions 14–23 (AESKAGPKAD) are enriched in basic and acidic residues. The stretch at 21 to 46 (KADGEEDEVKAARTRRKVLSRAVAAA) forms a coiled coil. The span at 57 to 69 (QQEEGVSESDGDE) shows a compositional bias: acidic residues. A coiled-coil region spans residues 82–110 (EYEWEYDEEEEKNQLEIERLEEQLSINVY). HAT repeat units lie at residues 126-158 (GELT…DEIS), 164-195 (LDRE…YSVG), 201-237 (GGLE…FESA), 242-275 (ARLE…WSED), 324-356 (GDPA…YLDR), 359-391 (KVKD…AMER), 394-430 (VDHQ…YLRR), and 487-520 (NNMQ…LERA). Phosphoserine is present on Ser-215. Residues 487 to 520 (NNMQKARELWDSIMTRGNAKYANMWLEYYNLERA) form a required for interaction with USP4 region. Residues 537 to 953 (CTSDYPEHVC…AATEAPKMSN (417 aa)) are necessary and sufficient for U6 snRNA binding. Residues 559 to 619 (LEDWDIAVQK…ALKKKKKIRG (61 aa)) adopt a coiled-coil conformation. Residues 590–601 (LVQQEEEKAEQR) show a composition bias toward basic and acidic residues. Residues 590 to 694 (LVQQEEEKAE…AASLKRDMPK (105 aa)) are disordered. The tract at residues 600-670 (QRKRARAEKK…EVAAGPAGKC (71 aa)) is required for nuclear localization. The Nuclear localization signal motif lies at 601–608 (RKRARAEK). The segment covering 602 to 617 (KRARAEKKALKKKKKI) has biased composition (basic residues). Residues 626–639 (DEDDEKEWGDDEEE) show a composition bias toward acidic residues. Ser-650 carries the phosphoserine modification. Phosphothreonine is present on Thr-657. The segment covering 677–694 (PPSKQKEKAASLKRDMPK) has biased composition (basic and acidic residues). The region spanning 704–782 (ITVFVSNLPY…RPMFVSPCVD (79 aa)) is the RRM 1 domain. Phosphoserine occurs at positions 769, 795, and 852. The RRM 2 domain maps to 801-878 (HKLFISGLPF…NIIKVAISNP (78 aa)). Residues 878–898 (PPQRKVPEKPETRKAPGGPML) are disordered. The span at 882–891 (KVPEKPETRK) shows a compositional bias: basic and acidic residues. Arg-906 carries the post-translational modification Omega-N-methylarginine. Positions 920 to 948 (LQRPSAAAPQAENGPAAAPAVAAPAATEA) are disordered. Positions 925–948 (AAAPQAENGPAAAPAVAAPAATEA) are enriched in low complexity.

Component of the 7SK snRNP complex at least composed of P-TEFb (composed of CDK9 and CCNT1/cyclin-T1), HEXIM1, HEXIM2, BCDIN3, SART3 proteins and 7SK and U6 snRNAs. Interacts with AGO1 and AGO2. Interacts with PRPF3 and USP4; the interaction with PRPF3 is direct and recruits USP4 to its substrate PRPF3. Interacts with USP15; the interaction is direct. Interacts with HIV-1 Tat. Ubiquitously expressed.

Its subcellular location is the nucleus. The protein localises to the nucleoplasm. It is found in the cajal body. It localises to the nucleus speckle. The protein resides in the cytoplasm. Its function is as follows. U6 snRNP-binding protein that functions as a recycling factor of the splicing machinery. Promotes the initial reassembly of U4 and U6 snRNPs following their ejection from the spliceosome during its maturation. Also binds U6atac snRNPs and may function as a recycling factor for U4atac/U6atac spliceosomal snRNP, an initial step in the assembly of U12-type spliceosomal complex. The U12-type spliceosomal complex plays a role in the splicing of introns with non-canonical splice sites. May also function as a substrate-targeting factor for deubiquitinases like USP4 and USP15. Recruits USP4 to ubiquitinated PRPF3 within the U4/U5/U6 tri-snRNP complex, promoting PRPF3 deubiquitination and thereby regulating the spliceosome U4/U5/U6 tri-snRNP spliceosomal complex disassembly. May also recruit the deubiquitinase USP15 to histone H2B and mediate histone deubiquitination, thereby regulating gene expression and/or DNA repair. May play a role in hematopoiesis probably through transcription regulation of specific genes including MYC. Functionally, regulates Tat transactivation activity through direct interaction. May be a cellular factor for HIV-1 gene expression and viral replication. The protein is Spliceosome associated factor 3, U4/U6 recycling protein of Homo sapiens (Human).